The following is a 192-amino-acid chain: Elongation factor P (192 aa).

Lysine 38 is modified (N6-(3,6-diaminohexanoyl)-5-hydroxylysine).

Belongs to the elongation factor P family. Post-translationally, may be beta-lysylated on the epsilon-amino group of Lys-38 by the combined action of EpmA and EpmB, and then hydroxylated on the C5 position of the same residue by EpmC (if this protein is present). Lysylation is critical for the stimulatory effect of EF-P on peptide-bond formation. The lysylation moiety may extend toward the peptidyltransferase center and stabilize the terminal 3-CCA end of the tRNA. Hydroxylation of the C5 position on Lys-38 may allow additional potential stabilizing hydrogen-bond interactions with the P-tRNA.

The protein localises to the cytoplasm. It functions in the pathway protein biosynthesis; polypeptide chain elongation. Its function is as follows. Involved in peptide bond synthesis. Alleviates ribosome stalling that occurs when 3 or more consecutive Pro residues or the sequence PPG is present in a protein, possibly by augmenting the peptidyl transferase activity of the ribosome. Modification of Lys-38 is required for alleviation. This Mannheimia succiniciproducens (strain KCTC 0769BP / MBEL55E) protein is Elongation factor P.